Reading from the N-terminus, the 134-residue chain is Cytochrome b (134 aa).

3 helical membrane-spanning segments follow: residues 33-53 (FGSLLGVCLGVQILTGLFLAM), 77-98 (WLLRYLHANGASMFFICLYLHV), and 113-133 (WNIGILLLFAVMATDFMGYVL). Heme b contacts are provided by H83 and H97.

Belongs to the cytochrome b family. The cytochrome bc1 complex contains 11 subunits: 3 respiratory subunits (MT-CYB, CYC1 and UQCRFS1), 2 core proteins (UQCRC1 and UQCRC2) and 6 low-molecular weight proteins (UQCRH/QCR6, UQCRB/QCR7, UQCRQ/QCR8, UQCR10/QCR9, UQCR11/QCR10 and a cleavage product of UQCRFS1). This cytochrome bc1 complex then forms a dimer. The cofactor is heme b.

It localises to the mitochondrion inner membrane. Its function is as follows. Component of the ubiquinol-cytochrome c reductase complex (complex III or cytochrome b-c1 complex) that is part of the mitochondrial respiratory chain. The b-c1 complex mediates electron transfer from ubiquinol to cytochrome c. Contributes to the generation of a proton gradient across the mitochondrial membrane that is then used for ATP synthesis. The polypeptide is Cytochrome b (MT-CYB) (Sturnira tildae (Tilda's yellow-shouldered bat)).